The following is a 123-amino-acid chain: MGTATGAGYFQRGSLFWFTVITVSFGYYTWAVFWPQSIPYQSLGPLGPFTKYLVDHYHTFLRNGYWLAWLIHVGESLYALVLCKRKGITDVQAQLLWFLQTFLFGVASLSILIAYRSKRQKHN.

The next 3 membrane-spanning stretches (helical) occupy residues 15–35, 63–83, and 95–115; these read LFWF…VFWP, NGYW…LVLC, and LLWF…LIAY.

The protein resides in the membrane. This Mus musculus (Mouse) protein is Transmembrane protein 254.